A 425-amino-acid polypeptide reads, in one-letter code: Serine--tRNA ligase (425 aa).

228–230 (TAE) is an L-serine binding site. 259–261 (RSE) provides a ligand contact to ATP. An L-serine-binding site is contributed by Glu282. Residue 346–349 (EIAS) participates in ATP binding. L-serine is bound at residue Ser382.

The protein belongs to the class-II aminoacyl-tRNA synthetase family. Type-1 seryl-tRNA synthetase subfamily. Homodimer. The tRNA molecule binds across the dimer.

The protein resides in the cytoplasm. The catalysed reaction is tRNA(Ser) + L-serine + ATP = L-seryl-tRNA(Ser) + AMP + diphosphate + H(+). The enzyme catalyses tRNA(Sec) + L-serine + ATP = L-seryl-tRNA(Sec) + AMP + diphosphate + H(+). Its pathway is aminoacyl-tRNA biosynthesis; selenocysteinyl-tRNA(Sec) biosynthesis; L-seryl-tRNA(Sec) from L-serine and tRNA(Sec): step 1/1. Its function is as follows. Catalyzes the attachment of serine to tRNA(Ser). Is also able to aminoacylate tRNA(Sec) with serine, to form the misacylated tRNA L-seryl-tRNA(Sec), which will be further converted into selenocysteinyl-tRNA(Sec). The chain is Serine--tRNA ligase from Rickettsia rickettsii (strain Iowa).